We begin with the raw amino-acid sequence, 337 residues long: tRNA N6-adenosine threonylcarbamoyltransferase (337 aa).

His107 and His111 together coordinate Fe cation. Residues 129–133 (LISGG), Asp162, Gly175, and Asn271 contribute to the substrate site. Fe cation is bound at residue Asp299.

The protein belongs to the KAE1 / TsaD family. It depends on Fe(2+) as a cofactor.

The protein localises to the cytoplasm. The enzyme catalyses L-threonylcarbamoyladenylate + adenosine(37) in tRNA = N(6)-L-threonylcarbamoyladenosine(37) in tRNA + AMP + H(+). In terms of biological role, required for the formation of a threonylcarbamoyl group on adenosine at position 37 (t(6)A37) in tRNAs that read codons beginning with adenine. Is involved in the transfer of the threonylcarbamoyl moiety of threonylcarbamoyl-AMP (TC-AMP) to the N6 group of A37, together with TsaE and TsaB. TsaD likely plays a direct catalytic role in this reaction. This chain is tRNA N6-adenosine threonylcarbamoyltransferase, found in Sulfurovum sp. (strain NBC37-1).